Here is a 488-residue protein sequence, read N- to C-terminus: Prostaglandin E2 receptor EP4 subtype (488 aa).

Residues 1–19 (MSIPGVNASFSSTPERLNS) are Extracellular-facing. The N-linked (GlcNAc...) asparagine glycan is linked to asparagine 7. The helical transmembrane segment at 20-43 (PVTIPAVMFIFGVVGNLVAIVVLC) threads the bilayer. Residues 44–55 (KSRKEQKETTFY) lie on the Cytoplasmic side of the membrane. Residues 56–79 (TLVCGLAVTDLLGTLLVSPVTIAT) form a helical membrane-spanning segment. Residues 80–96 (YMKGQWPGDQALCDYST) are Extracellular-facing. The cysteines at positions 92 and 170 are disulfide-linked. Residues 97–115 (FILLFFGLSGLSIICAMSI) traverse the membrane as a helical segment. Topologically, residues 116 to 135 (ERYLAINHAYFYSHYVDKRL) are cytoplasmic. A helical transmembrane segment spans residues 136–160 (AGLTLFAVYASNVLFCALPNMGLGR). The Extracellular portion of the chain corresponds to 161–184 (SERQYPGTWCFIDWTTNVTAYAAF). A helical membrane pass occupies residues 185 to 211 (SYMYAGFSSFLILATVLCNVLVCGALL). Over 212–270 (RMLRQFMRRTSLGTEQHHAAAAAAVASVACRGHAAASPALQRLSDFRRRRSFRRIAGAE) the chain is Cytoplasmic. A helical membrane pass occupies residues 271-298 (IQMVILLIATSLVVLICSIPLVVRVFIN). The Extracellular segment spans residues 299 to 315 (QLYQPSVVKDISRNPDL). Residues 316–335 (QAIRIASVNPILDPWIYILL) form a helical membrane-spanning segment. Residues 336 to 488 (RKTVLSKAIE…ETLKLSEKCI (153 aa)) are Cytoplasmic-facing. The tract at residues 358 to 380 (GRDGSAQHCSESRRTSSAMSGHS) is disordered. Phosphoserine occurs at positions 377, 380, 382, and 385.

Belongs to the G-protein coupled receptor 1 family. As to quaternary structure, interacts with FEM1A. Post-translationally, phosphorylation mediates agonist-mediated desensitization by promoting cytoplasmic retention.

It is found in the cell membrane. Functionally, receptor for prostaglandin E2 (PGE2). The activity of this receptor is mediated by G(s) proteins that stimulate adenylate cyclase. Has a relaxing effect on smooth muscle. May play an important role in regulating renal hemodynamics, intestinal epithelial transport, adrenal aldosterone secretion, and uterine function. In Rattus norvegicus (Rat), this protein is Prostaglandin E2 receptor EP4 subtype (Ptger4).